Reading from the N-terminus, the 553-residue chain is Copine-9 (553 aa).

C2 domains lie at 1–125 (MSLG…ERTL) and 132–255 (KCGT…FTVY). N-linked (GlcNAc...) asparagine glycosylation is present at asparagine 95. Residues aspartate 163, aspartate 169, aspartate 225, aspartate 227, and aspartate 233 each contribute to the Ca(2+) site. A VWFA domain is found at 299–500 (NFTVAIDFTA…VQFVPFRDYV (202 aa)). The tract at residues 531 to 553 (TRDIQPRPPPPANPSPIPAPEQP) is disordered. Residues 536–553 (PRPPPPANPSPIPAPEQP) are compositionally biased toward pro residues.

This sequence belongs to the copine family. Ca(2+) is required as a cofactor. As to expression, expressed in melanocytes.

In terms of biological role, probable calcium-dependent phospholipid-binding protein that may play a role in calcium-mediated intracellular processes. Plays a role in dendrite formation by melanocytes. The sequence is that of Copine-9 from Homo sapiens (Human).